The sequence spans 1676 residues: Protein TIC 214 (1676 aa).

6 consecutive transmembrane segments (helical) span residues 23 to 43 (AGPL…PIAP), 71 to 91 (GILI…FLSI), 96 to 116 (LYMI…YMFF), 145 to 165 (AFLD…SPVM), 179 to 199 (VSLF…MFVL), and 226 to 246 (IFPP…PVSF).

It belongs to the TIC214 family. Part of the Tic complex.

The protein resides in the plastid. Its subcellular location is the chloroplast inner membrane. Its function is as follows. Involved in protein precursor import into chloroplasts. May be part of an intermediate translocation complex acting as a protein-conducting channel at the inner envelope. The chain is Protein TIC 214 from Zygnema circumcarinatum (Green alga).